The sequence spans 358 residues: 5-amino-6-(D-ribitylamino)uracil--L-tyrosine 4-hydroxyphenyl transferase 2 (358 aa).

Residues 45–292 (VTFVKNTNIE…ESIKNIQAPR (248 aa)) enclose the Radical SAM core domain. Cysteine 59, cysteine 63, and cysteine 66 together coordinate [4Fe-4S] cluster.

The protein belongs to the radical SAM superfamily. CofH family. Consists of two subunits, CofG and CofH. [4Fe-4S] cluster serves as cofactor.

It carries out the reaction 5-amino-6-(D-ribitylamino)uracil + L-tyrosine + S-adenosyl-L-methionine = 5-amino-5-(4-hydroxybenzyl)-6-(D-ribitylimino)-5,6-dihydrouracil + 2-iminoacetate + 5'-deoxyadenosine + L-methionine + H(+). It functions in the pathway cofactor biosynthesis; coenzyme F0 biosynthesis. In terms of biological role, catalyzes the radical-mediated synthesis of 5-amino-5-(4-hydroxybenzyl)-6-(D-ribitylimino)-5,6-dihydrouracil from 5-amino-6-(D-ribitylamino)uracil and L-tyrosine. This is 5-amino-6-(D-ribitylamino)uracil--L-tyrosine 4-hydroxyphenyl transferase 2 from Methanococcus maripaludis (strain DSM 14266 / JCM 13030 / NBRC 101832 / S2 / LL).